We begin with the raw amino-acid sequence, 339 residues long: Ketol-acid reductoisomerase (NADP(+)) (339 aa).

The 182-residue stretch at 1 to 182 (MRVYYDRDAD…GGGRAGIIET (182 aa)) folds into the KARI N-terminal Rossmann domain. Residues 24–27 (YGSQ), R48, S51, S53, and 83–86 (DELQ) each bind NADP(+). Residue H108 is part of the active site. Residue G134 coordinates NADP(+). The 146-residue stretch at 183-328 (TFKEECETDL…ERLRGMMPWI (146 aa)) folds into the KARI C-terminal knotted domain. Residues D191, E195, E227, and E231 each contribute to the Mg(2+) site. Substrate is bound at residue S252.

It belongs to the ketol-acid reductoisomerase family. The cofactor is Mg(2+).

The catalysed reaction is (2R)-2,3-dihydroxy-3-methylbutanoate + NADP(+) = (2S)-2-acetolactate + NADPH + H(+). The enzyme catalyses (2R,3R)-2,3-dihydroxy-3-methylpentanoate + NADP(+) = (S)-2-ethyl-2-hydroxy-3-oxobutanoate + NADPH + H(+). Its pathway is amino-acid biosynthesis; L-isoleucine biosynthesis; L-isoleucine from 2-oxobutanoate: step 2/4. It participates in amino-acid biosynthesis; L-valine biosynthesis; L-valine from pyruvate: step 2/4. Its function is as follows. Involved in the biosynthesis of branched-chain amino acids (BCAA). Catalyzes an alkyl-migration followed by a ketol-acid reduction of (S)-2-acetolactate (S2AL) to yield (R)-2,3-dihydroxy-isovalerate. In the isomerase reaction, S2AL is rearranged via a Mg-dependent methyl migration to produce 3-hydroxy-3-methyl-2-ketobutyrate (HMKB). In the reductase reaction, this 2-ketoacid undergoes a metal-dependent reduction by NADPH to yield (R)-2,3-dihydroxy-isovalerate. This chain is Ketol-acid reductoisomerase (NADP(+)), found in Methylobacterium sp. (strain 4-46).